The following is a 146-amino-acid chain: Hemoglobin subunit beta-1 (146 aa).

Residues 2 to 146 (HWTAEEKQLI…VSHSLARRYH (145 aa)) form the Globin domain. 2 residues coordinate heme b: His-63 and His-92.

This sequence belongs to the globin family. As to quaternary structure, the major hemoglobin component (HbIII) is a tetramer of two alpha-2 chains and two beta-1 chains. In terms of tissue distribution, red blood cells.

Functionally, involved in oxygen transport from the lung to the various peripheral tissues. In Varanus albigularis (White-throated monitor), this protein is Hemoglobin subunit beta-1 (HBB1).